The sequence spans 344 residues: Ferrochelatase (344 aa).

His-214 and Glu-295 together coordinate Fe cation.

Belongs to the ferrochelatase family.

It localises to the cytoplasm. It carries out the reaction heme b + 2 H(+) = protoporphyrin IX + Fe(2+). It functions in the pathway porphyrin-containing compound metabolism; protoheme biosynthesis; protoheme from protoporphyrin-IX: step 1/1. Catalyzes the ferrous insertion into protoporphyrin IX. This Allorhizobium ampelinum (strain ATCC BAA-846 / DSM 112012 / S4) (Agrobacterium vitis (strain S4)) protein is Ferrochelatase.